Reading from the N-terminus, the 369-residue chain is 3-dehydroquinate synthase (369 aa).

NAD(+) is bound by residues 80–85, 114–118, 138–139, Lys151, Lys160, and 178–181; these read DGEQYK, GVIGD, TT, and TLKT. Positions 193, 256, and 273 each coordinate Zn(2+).

It belongs to the sugar phosphate cyclases superfamily. Dehydroquinate synthase family. Requires Co(2+) as cofactor. Zn(2+) serves as cofactor. NAD(+) is required as a cofactor.

Its subcellular location is the cytoplasm. The enzyme catalyses 7-phospho-2-dehydro-3-deoxy-D-arabino-heptonate = 3-dehydroquinate + phosphate. It functions in the pathway metabolic intermediate biosynthesis; chorismate biosynthesis; chorismate from D-erythrose 4-phosphate and phosphoenolpyruvate: step 2/7. In terms of biological role, catalyzes the conversion of 3-deoxy-D-arabino-heptulosonate 7-phosphate (DAHP) to dehydroquinate (DHQ). This Psychrobacter cryohalolentis (strain ATCC BAA-1226 / DSM 17306 / VKM B-2378 / K5) protein is 3-dehydroquinate synthase.